The sequence spans 514 residues: Alpha-amylase (514 aa).

A signal peptide spans 1–31 (MIQKRKRTVSFRLVLMCTLLFVSLPITKTSA). Ca(2+) is bound by residues Asn133, Asp190, Ala212, Asp214, Asp225, Asp231, Asp233, and Asp235. Asp190 contributes to the Na(+) binding site. Na(+) contacts are provided by Asp214, Asp225, and Asp231. The active-site Nucleophile is Asp262. Position 266 (His266) interacts with Ca(2+). The active-site Proton donor is Glu292. The Ca(2+) site is built by Gly331, Asp438, and Asp461.

The protein belongs to the glycosyl hydrolase 13 family. In terms of assembly, monomer. It depends on Ca(2+) as a cofactor. Requires Na(+) as cofactor.

It is found in the secreted. It catalyses the reaction Endohydrolysis of (1-&gt;4)-alpha-D-glucosidic linkages in polysaccharides containing three or more (1-&gt;4)-alpha-linked D-glucose units.. The polypeptide is Alpha-amylase (Bacillus amyloliquefaciens (Bacillus velezensis)).